Consider the following 277-residue polypeptide: PPLRGANSPGPSATPVPGPNTVPHTPRLRNTPASPAARTLENPRQAQRRNDTGKDRGTHRQRAETPSRSPVPTTNTVGRHAPAVRRQRRTQHAYGPQHSLEDPPRGPAPAVFWVCRGAAGWVCAGCVAGVCWVCRGCVGRVCQGVSRACAGCVVPGVSRACGGCAGGVWWRGVSAVCAASGCAASQERVCGLAAVISPAVPRAVVPRPRALLFVCPQGPMLPSPGNFLFSPGNHTDTDTRLLFAVRAARRFYSPSPSSAPHATSRRPHTQLQVSPPR.

2 disordered regions span residues 1 to 103 (PPLR…LEDP) and 254 to 277 (PSPSSAPHATSRRPHTQLQVSPPR). The segment covering 48 to 65 (RRNDTGKDRGTHRQRAET) has biased composition (basic and acidic residues). Residues 66-77 (PSRSPVPTTNTV) are compositionally biased toward polar residues. Positions 82 to 91 (PAVRRQRRTQ) are enriched in basic residues.

This is an uncharacterized protein from Homo sapiens (Human).